The following is a 303-amino-acid chain: Probable 5-dehydro-4-deoxyglucarate dehydratase (303 aa).

Belongs to the DapA family.

The catalysed reaction is 5-dehydro-4-deoxy-D-glucarate + H(+) = 2,5-dioxopentanoate + CO2 + H2O. It participates in carbohydrate acid metabolism; D-glucarate degradation; 2,5-dioxopentanoate from D-glucarate: step 2/2. This is Probable 5-dehydro-4-deoxyglucarate dehydratase from Ectopseudomonas mendocina (strain ymp) (Pseudomonas mendocina).